The sequence spans 255 residues: Cell division protein ZapD (255 aa).

The protein belongs to the ZapD family. In terms of assembly, interacts with FtsZ.

The protein resides in the cytoplasm. In terms of biological role, cell division factor that enhances FtsZ-ring assembly. Directly interacts with FtsZ and promotes bundling of FtsZ protofilaments, with a reduction in FtsZ GTPase activity. This chain is Cell division protein ZapD, found in Methylococcus capsulatus (strain ATCC 33009 / NCIMB 11132 / Bath).